The primary structure comprises 629 residues: tRNA uridine 5-carboxymethylaminomethyl modification enzyme MnmG (629 aa).

Residues 13 to 18 (GGGHAG), Val125, and Ser180 each bind FAD. 273–287 (GPRYCPSIEDKVMRF) provides a ligand contact to NAD(+). Position 370 (Gln370) interacts with FAD.

It belongs to the MnmG family. In terms of assembly, homodimer. Heterotetramer of two MnmE and two MnmG subunits. It depends on FAD as a cofactor.

The protein resides in the cytoplasm. Functionally, NAD-binding protein involved in the addition of a carboxymethylaminomethyl (cmnm) group at the wobble position (U34) of certain tRNAs, forming tRNA-cmnm(5)s(2)U34. This chain is tRNA uridine 5-carboxymethylaminomethyl modification enzyme MnmG, found in Cronobacter sakazakii (strain ATCC BAA-894) (Enterobacter sakazakii).